The primary structure comprises 509 residues: Pancreatic secretory granule membrane major glycoprotein GP2 (509 aa).

An N-terminal signal peptide occupies residues 1 to 21; it reads MVGSYVLWLALASCILTLASP. The tract at residues 36–56 is D10C; it reads DPCQNYTLLDEPSRSTENTEG. 10 disulfide bridges follow: C38-C132, C60-C147, C82-C120, C88-C152, C113-C121, C162-C172, C166-C181, C183-C213, C201-C292, and C233-C256. N-linked (GlcNAc...) asparagine glycans are attached at residues N40, N97, and N109. Positions 158 to 202 constitute an EGF-like domain; the sequence is ATDKCKNLCRPEEACSFLNGTWDCFCRSDLNSSDVHSLQPRLNCG. Residues N176, N188, and N232 are each glycosylated (N-linked (GlcNAc...) asparagine). Residues 200–293 form a ZP-N region; the sequence is NCGAKEIQVS…TILNINFQCA (94 aa). A ZP domain is found at 200–456; that stretch reads NCGAKEIQVS…PCCSRSQQRS (257 aa). Residues N263 and N314 are each glycosylated (N-linked (GlcNAc...) asparagine). The tract at residues 294 to 317 is flexible ZP-N/ZP-C linker; it reads YPLDMKVSLQTALHPIVSSLNISV. An internal hydrophobic patch (IHP) region spans residues 318 to 329; it reads DGEGEFTVRMAL. The tract at residues 318–456 is ZP-C; that stretch reads DGEGEFTVRM…PCCSRSQQRS (139 aa). 3 disulfide bridges follow: C373/C433, C394/C449, and C438/C445. The interval 463-471 is external hydrophobic patch (EHP); it reads PARVLDLGP. D484 is lipidated: GPI-anchor amidated aspartate. A propeptide spans 485–509 (removed in mature form); the sequence is GTPSTAGFLLAWPMLLLPILLAELF.

Interacts with SYCN. Interacts with bacterial adhesin fimH. N-glycosylated. In terms of tissue distribution, expressed in pancreas.

Its subcellular location is the zymogen granule membrane. The protein localises to the secreted. It localises to the cell membrane. The protein resides in the apical cell membrane. It is found in the membrane raft. Its subcellular location is the endosome. Functionally, functions as an intestinal M-cell transcytotic receptor specific of type-I-piliated bacteria that participates in the mucosal immune response toward these bacteria. At the apical membrane of M-cells it binds fimH, a protein of the bacteria type I pilus tip. Internalizes bound bacteria, like E.coli and S.typhimurium, from the lumen of the intestine and delivers them, through M-cells, to the underlying organized lymphoid follicles where they are captured by antigen-presenting dendritic cells to elicit a mucosal immune response. This Canis lupus familiaris (Dog) protein is Pancreatic secretory granule membrane major glycoprotein GP2.